Here is a 396-residue protein sequence, read N- to C-terminus: Anticodon nuclease (396 aa).

Functionally, anticodon endonuclease (ACNase) that triggers the cleavage ligation of tRNA(Lys). It is activated by T4 stp protein and masked by the prrD protein (the endonuclease subunit of EcoprrI). The prr locus restricts phage T4 mutants lacking polynucleotide kinase or RNA ligase; T4 mutants lacking these genes manifest a T4-induced anticodon nuclease (ACNase). It is thought that Stp and other T4-encoded ACNase factors counteract the masking agents, thus activating the latent ACNase. The protein is Anticodon nuclease of Escherichia coli.